Here is a 344-residue protein sequence, read N- to C-terminus: Protein RecA (344 aa).

65-72 serves as a coordination point for ATP; the sequence is GPESSGKT.

This sequence belongs to the RecA family.

It is found in the cytoplasm. Its function is as follows. Can catalyze the hydrolysis of ATP in the presence of single-stranded DNA, the ATP-dependent uptake of single-stranded DNA by duplex DNA, and the ATP-dependent hybridization of homologous single-stranded DNAs. It interacts with LexA causing its activation and leading to its autocatalytic cleavage. The chain is Protein RecA from Nitratiruptor sp. (strain SB155-2).